The chain runs to 402 residues: Protein prenyltransferase alpha subunit repeat-containing protein 1 (402 aa).

Ala2 carries the post-translational modification N-acetylalanine. PFTA repeat units follow at residues 87-120 (LIDV…LNPI), 122-155 (DLHL…QETS), 180-213 (EMEV…KLDV), and 219-252 (ELSS…SQTV). The interval 263-282 (LRSEPALVPPKDEEAAVSTE) is disordered. The PFTA 5 repeat unit spans residues 295-328 (EVEFSTDLIDSYPGHETLWCHRRHIFYLQHHLNA).

This sequence belongs to the protein prenyltransferase subunit alpha family.

The sequence is that of Protein prenyltransferase alpha subunit repeat-containing protein 1 (PTAR1) from Homo sapiens (Human).